The chain runs to 258 residues: Tryptophan synthase alpha chain (258 aa).

Catalysis depends on proton acceptor residues glutamate 52 and aspartate 63.

It belongs to the TrpA family. As to quaternary structure, tetramer of two alpha and two beta chains.

The catalysed reaction is (1S,2R)-1-C-(indol-3-yl)glycerol 3-phosphate + L-serine = D-glyceraldehyde 3-phosphate + L-tryptophan + H2O. It functions in the pathway amino-acid biosynthesis; L-tryptophan biosynthesis; L-tryptophan from chorismate: step 5/5. The alpha subunit is responsible for the aldol cleavage of indoleglycerol phosphate to indole and glyceraldehyde 3-phosphate. The polypeptide is Tryptophan synthase alpha chain (Streptococcus pneumoniae serotype 2 (strain D39 / NCTC 7466)).